Consider the following 385-residue polypeptide: Transcription factor-like protein DPB (385 aa).

Disordered regions lie at residues 1-53 and 71-102; these read MTTT…EQTI and DIQGDDAGSQGASGVKKKKRGQRAAGPDKTGR. Residues 22-31 show a composition bias toward polar residues; sequence PSTRSWGTAV. Residues 32 to 53 are compositionally biased toward low complexity; it reads SGQSVSTSGSMGSPSSRSEQTI. Residues 101 to 184 mediate DNA binding; that stretch reads GRGLRQFSMK…KKEIQWRGLP (84 aa). The DEF box signature appears at 150-184; that stretch reads DEKNIRRRVYDALNVLMAMDIISKDKKEIQWRGLP. Residues 185 to 234 are a coiled coil; that stretch reads RTSLSDIEELKNERLSLRNRIEKKTAYSQELEEQYVGLQNLIQRNEHLYS. Positions 296-385 are disordered; that stretch reads PPQQPNGRNN…IMNSSMKPEN (90 aa). The segment covering 300 to 327 has biased composition (polar residues); sequence PNGRNNSQLVCHNFTPENPNKGPSTGPT. Positions 336 to 349 are enriched in low complexity; that stretch reads HLQSQQHQQHSQLQ. The span at 355–364 shows a compositional bias: polar residues; the sequence is ETNNVTSSAD.

It belongs to the E2F/DP family. As to quaternary structure, heterodimer with non-phosphorylated E2FC. No interaction with phosphorylated E2FC. Interacts preferentially with E2FC, but also with E2FA and E2FB. Interacts with SKP2A. Targeted for proteasomal degradation by the SCF(SKP2A) E3 ubiquitin ligase complex. In terms of processing, phosphorylated. As to expression, ubiquitous.

Its subcellular location is the nucleus. It localises to the cytoplasm. In terms of biological role, involved in the regulation of the G1/S transition. Increases the DNA binding activity of E2F proteins after heterodimerization. The complex DPB/E2FC restricts cell division and lateral root initiation and may function as a negative regulator of E2F-regulated genes. The interaction with SKP2A is controlled by auxin. The chain is Transcription factor-like protein DPB (DPB) from Arabidopsis thaliana (Mouse-ear cress).